Reading from the N-terminus, the 447-residue chain is Clusterin (447 aa).

The N-terminal stretch at 1–22 is a signal peptide; the sequence is MKTLLLCVGLLLSWERGQVLGD. A Nuclear localization signal motif is present at residues 77-80; the sequence is KKNK. Asn85 and Asn102 each carry an N-linked (GlcNAc...) asparagine glycan. Intrachain disulfides connect Cys101-Cys311, Cys112-Cys303, Cys115-Cys300, Cys120-Cys293, and Cys128-Cys283. Ser132 carries the post-translational modification Phosphoserine. Residues Asn144, Asn289, Asn326, Asn352, and Asn372 are each glycosylated (N-linked (GlcNAc...) asparagine). At Ser394 the chain carries Phosphoserine. The Nuclear localization signal motif lies at 441–445; sequence RKKKR.

Belongs to the clusterin family. In terms of assembly, antiparallel disulfide-linked heterodimer of an alpha chain and a beta chain. Self-associates and forms higher oligomers. Interacts with a broad range of misfolded proteins, including APP, APOC2 and LYZ. Slightly acidic pH promotes interaction with misfolded proteins. Forms high-molecular weight oligomers upon interaction with misfolded proteins. Interacts with APOA1, LRP2, CLUAP1 and PON1. Interacts with the complement membrane attack complex. Interacts (via alpha chain) with XRCC6. Interacts with SYVN1, COMMD1, BTRC, CUL1 and with ubiquitin and SCF (SKP1-CUL1-F-box protein) E3 ubiquitin-protein ligase complexes. Interacts (via alpha chain) with BAX in stressed cells, where BAX undergoes a conformation change leading to association with the mitochondrial membrane. Does not interact with BAX in unstressed cells. Found in a complex with LTF, CLU, EPPIN and SEMG1. Interacts (immaturely glycosylated pre-secreted form) with HSPA5; this interaction promotes CLU stability and facilitates stress-induced CLU retrotranslocation from the secretory pathway to the mitochondria, thereby reducing stress-induced apoptosis by stabilizing mitochondrial membrane integrity. Interacts with BCL2L1; this interaction releases and activates BAX and promotes cell death. Interacts with TGFBR2 and ACVR1. Interacts (secreted form) with STMN3; this interaction may act as an important modulator during neuronal differentiation. Interacts with VLDLR and LRP8. Proteolytically cleaved on its way through the secretory system, probably within the Golgi lumen. Proteolytic cleavage is not necessary for its chaperone activity. All non-secreted forms are not proteolytically cleaved. Chaperone activity of uncleaved forms is dependent on a non-reducing environment. Post-translationally, polyubiquitinated, leading to proteasomal degradation. Under cellular stress, the intracellular level of cleaved form is reduced due to proteasomal degradation. In terms of processing, heavily N-glycosylated. About 30% of the protein mass is comprised of complex N-linked carbohydrate. Endoplasmic reticulum (ER) stress induces changes in glycosylation status and increases level of hypoglycosylated forms. Core carbohydrates are essential for chaperone activity. Non-secreted forms are hypoglycosylated or unglycosylated.

Its subcellular location is the secreted. The protein resides in the nucleus. The protein localises to the cytoplasm. It is found in the mitochondrion membrane. It localises to the cytosol. Its subcellular location is the microsome. The protein resides in the endoplasmic reticulum. The protein localises to the mitochondrion. It is found in the perinuclear region. It localises to the cytoplasmic vesicle. Its subcellular location is the secretory vesicle. The protein resides in the chromaffin granule. Its function is as follows. Functions as extracellular chaperone that prevents aggregation of non native proteins. Prevents stress-induced aggregation of blood plasma proteins. Inhibits formation of amyloid fibrils by APP, APOC2, B2M, CALCA, CSN3, SNCA and aggregation-prone LYZ variants (in vitro). Does not require ATP. Maintains partially unfolded proteins in a state appropriate for subsequent refolding by other chaperones, such as HSPA8/HSC70. Does not refold proteins by itself. Binding to cell surface receptors triggers internalization of the chaperone-client complex and subsequent lysosomal or proteasomal degradation. When secreted, protects cells against apoptosis and against cytolysis by complement: inhibits assembly of the complement membrane attack complex (MAC) by preventing polymerization of C9 pore component of the MAC complex. Intracellular forms interact with ubiquitin and SCF (SKP1-CUL1-F-box protein) E3 ubiquitin-protein ligase complexes and promote the ubiquitination and subsequent proteasomal degradation of target proteins. Promotes proteasomal degradation of COMMD1 and IKBKB. Modulates NF-kappa-B transcriptional activity. Following stress, promotes apoptosis. Inhibits apoptosis when associated with the mitochondrial membrane by interference with BAX-dependent release of cytochrome c into the cytoplasm. Plays a role in the regulation of cell proliferation. An intracellular form suppresses stress-induced apoptosis by stabilizing mitochondrial membrane integrity through interaction with HSPA5. Secreted form does not affect caspase or BAX-mediated intrinsic apoptosis and TNF-induced NF-kappa-B-activity. Secreted form act as an important modulator during neuronal differentiation through interaction with STMN3. Plays a role in the clearance of immune complexes that arise during cell injury. The polypeptide is Clusterin (CLU) (Oryctolagus cuniculus (Rabbit)).